A 725-amino-acid chain; its full sequence is Glyoxysomal fatty acid beta-oxidation multifunctional protein MFP-a (725 aa).

In the N-terminal section; belongs to the enoyl-CoA hydratase/isomerase family. The protein in the central section; belongs to the 3-hydroxyacyl-CoA dehydrogenase family.

Its subcellular location is the glyoxysome. It carries out the reaction a (3S)-3-hydroxyacyl-CoA = a (2E)-enoyl-CoA + H2O. The enzyme catalyses a 4-saturated-(3S)-3-hydroxyacyl-CoA = a (3E)-enoyl-CoA + H2O. It catalyses the reaction a (3Z)-enoyl-CoA = a 4-saturated (2E)-enoyl-CoA. The catalysed reaction is a (3E)-enoyl-CoA = a 4-saturated (2E)-enoyl-CoA. It carries out the reaction (3S)-3-hydroxybutanoyl-CoA = (3R)-3-hydroxybutanoyl-CoA. The enzyme catalyses a (3S)-3-hydroxyacyl-CoA + NAD(+) = a 3-oxoacyl-CoA + NADH + H(+). It participates in lipid metabolism; fatty acid beta-oxidation. The protein is Glyoxysomal fatty acid beta-oxidation multifunctional protein MFP-a of Cucumis sativus (Cucumber).